We begin with the raw amino-acid sequence, 157 residues long: Eukaryotic translation initiation factor 5A-1 (157 aa).

N-acetylserine is present on Ser-2. Position 2 is a phosphoserine (Ser-2). Phosphothreonine is present on residues Thr-7 and Thr-10. Hypusine is present on Lys-51. The residue at position 74 (Ser-74) is a Phosphoserine. Lys-86 participates in a covalent cross-link: Glycyl lysine isopeptide (Lys-Gly) (interchain with G-Cter in ubiquitin).

The protein belongs to the eIF-5A family. As to quaternary structure, homodimer. Binds to 80S ribosomes. Actively translating ribosomes show mutually exclusive binding of eIF5a (HYP2 or ANB1) and EFT1/eEF2. Interacts with DYS1 and LIA1. Lys-51 undergoes hypusination, a unique post-translational modification that consists in the addition of a butylamino group from spermidine to lysine side chain, leading to the formation of the unusual amino acid hypusine. eIF-5As are the only known proteins to undergo this modification, which is essential for their function.

The protein localises to the cytoplasm. Its function is as follows. Translation factor that promotes translation elongation and termination, particularly upon ribosome stalling at specific amino acid sequence contexts. Binds between the exit (E) and peptidyl (P) site of the ribosome and promotes rescue of stalled ribosome: specifically required for efficient translation of polyproline-containing peptides as well as other motifs that stall the ribosome. Acts as a ribosome quality control (RQC) cofactor by joining the RQC complex to facilitate peptidyl transfer during CAT tailing step. Involved in actin dynamics and cell cycle progression, mRNA decay and probably in a pathway involved in stress response and maintenance of cell wall integrity. In Saccharomyces cerevisiae (strain ATCC 204508 / S288c) (Baker's yeast), this protein is Eukaryotic translation initiation factor 5A-1 (HYP2).